We begin with the raw amino-acid sequence, 294 residues long: 4-hydroxy-tetrahydrodipicolinate synthase (294 aa).

Threonine 44 is a pyruvate binding site. The active-site Proton donor/acceptor is tyrosine 132. Lysine 160 acts as the Schiff-base intermediate with substrate in catalysis. Residue valine 202 participates in pyruvate binding.

The protein belongs to the DapA family. Homotetramer; dimer of dimers.

Its subcellular location is the cytoplasm. The enzyme catalyses L-aspartate 4-semialdehyde + pyruvate = (2S,4S)-4-hydroxy-2,3,4,5-tetrahydrodipicolinate + H2O + H(+). The protein operates within amino-acid biosynthesis; L-lysine biosynthesis via DAP pathway; (S)-tetrahydrodipicolinate from L-aspartate: step 3/4. Functionally, catalyzes the condensation of (S)-aspartate-beta-semialdehyde [(S)-ASA] and pyruvate to 4-hydroxy-tetrahydrodipicolinate (HTPA). This is 4-hydroxy-tetrahydrodipicolinate synthase from Leptospira borgpetersenii serovar Hardjo-bovis (strain L550).